A 216-amino-acid chain; its full sequence is MLYLFFALIFIISCSTKVESKKKYTYSFPKTYKEEKPTRGSLFKSPQSAYLYGSVRASEVGDVIYIRVIESINAIESVSTNVGRSTSFSNAISSFFGVHPATLKNLGAGGKSSFASKGGSKFQQSGVLTTTLAGRVVKVFPNGTMLVEAKKYIEVNGVKREFLLRGIVRPEDIDSNNTVTSDKIADMEIFFEGRGYIVRGGEPGWLAKIFAILFPF.

Residues 1 to 13 (MLYLFFALIFIIS) form the signal peptide. A lipid anchor (N-palmitoyl cysteine) is attached at C14. A lipid anchor (S-diacylglycerol cysteine) is attached at C14.

This sequence belongs to the FlgH family. In terms of assembly, the basal body constitutes a major portion of the flagellar organelle and consists of four rings (L,P,S, and M) mounted on a central rod.

It is found in the cell outer membrane. The protein resides in the bacterial flagellum basal body. Functionally, assembles around the rod to form the L-ring and probably protects the motor/basal body from shearing forces during rotation. The sequence is that of Flagellar L-ring protein (flgH) from Aquifex aeolicus (strain VF5).